Here is a 551-residue protein sequence, read N- to C-terminus: Intestinal-type alkaline phosphatase 2 (551 aa).

Residues 1 to 19 form the signal peptide; that stretch reads MQGAWVLLLLGFRLQLSLS. Residue Asp-61 participates in Mg(2+) binding. Asp-61 and Ser-111 together coordinate Zn(2+). Ser-111 acts as the Phosphoserine intermediate in catalysis. Residues Cys-140 and Cys-202 are joined by a disulfide bond. The N-linked (GlcNAc...) asparagine glycan is linked to Asn-141. Ser-174 is a Mg(2+) binding site. Glu-235 contacts Ca(2+). Asn-241 carries N-linked (GlcNAc...) asparagine glycosylation. Positions 288, 289, and 304 each coordinate Ca(2+). Glu-330 serves as a coordination point for Mg(2+). Zn(2+) is bound by residues Asp-335, His-339, Asp-376, and His-377. Asn-426 carries an N-linked (GlcNAc...) asparagine glycan. A disulfide bridge connects residues Cys-485 and Cys-492. Residues 496-537 are disordered; that stretch reads PPADENRPTTPVQNSTTTTTTTTTTTTTTTTTRVQNSASSLG. The N-linked (GlcNAc...) asparagine glycan is linked to Asn-509. Residues 511 to 527 show a composition bias toward low complexity; it reads TTTTTTTTTTTTTTTTT. A compositionally biased stretch (polar residues) spans 528–537; that stretch reads RVQNSASSLG. Residue Asn-531 is the site of GPI-anchor amidated asparagine attachment. A propeptide spans 532-551 (removed in mature form); the sequence is SASSLGPATAPLAWHYWPRR.

The protein belongs to the alkaline phosphatase family. Homodimer. Mg(2+) is required as a cofactor. Zn(2+) serves as cofactor. Requires Ca(2+) as cofactor.

It is found in the cell membrane. The enzyme catalyses a phosphate monoester + H2O = an alcohol + phosphate. In terms of biological role, alkaline phosphatase that can hydrolyze various phosphate compounds. This chain is Intestinal-type alkaline phosphatase 2, found in Rattus norvegicus (Rat).